The primary structure comprises 179 residues: Cytochrome b6-f complex iron-sulfur subunit (179 aa).

A helical membrane pass occupies residues 21–43; the sequence is LLTFGSVTGVALGALYPVVNYFI. In terms of domain architecture, Rieske spans 61–162; that stretch reads GNDVVLSKFL…VSVTDDKVFL (102 aa). Positions 108, 110, 126, and 129 each coordinate [2Fe-2S] cluster. Cysteine 113 and cysteine 128 form a disulfide bridge.

Belongs to the Rieske iron-sulfur protein family. As to quaternary structure, the 4 large subunits of the cytochrome b6-f complex are cytochrome b6, subunit IV (17 kDa polypeptide, PetD), cytochrome f and the Rieske protein, while the 4 small subunits are PetG, PetL, PetM and PetN. The complex functions as a dimer. [2Fe-2S] cluster serves as cofactor.

The protein resides in the cellular thylakoid membrane. The enzyme catalyses 2 oxidized [plastocyanin] + a plastoquinol + 2 H(+)(in) = 2 reduced [plastocyanin] + a plastoquinone + 4 H(+)(out). Functionally, component of the cytochrome b6-f complex, which mediates electron transfer between photosystem II (PSII) and photosystem I (PSI), cyclic electron flow around PSI, and state transitions. The chain is Cytochrome b6-f complex iron-sulfur subunit from Synechococcus elongatus (strain ATCC 33912 / PCC 7942 / FACHB-805) (Anacystis nidulans R2).